The primary structure comprises 599 residues: Crinkler effector protein 8 (599 aa).

The N-terminal stretch at 1–17 (MVTLFCAVVGVAGSTFP) is a signal peptide. The LQLFLAK domain stretch occupies residues 18–52 (VDINENKSVGHLKKAIKEEKMYQFPADELQLFLAK). N-linked (GlcNAc...) asparagine glycosylation occurs at Asn-23. A DWL domain region spans residues 53–109 (AGGNAWLSSLTEDVKKLKKGEKTALVKSLTQEEKELQGEDPISECLEGMDPPKVKQI). An HVLVXXP motif motif is present at residues 110–116 (HVLVALP). Residues 117–590 (PGTSSAPISD…EAAEQESQGK (474 aa)) are C-terminal D2 effector domain. 3 positions are modified to phosphoserine: Ser-249, Ser-281, and Ser-385. Positions 289–590 (LSKKLVWSYG…EAAEQESQGK (302 aa)) constitute a Protein kinase domain. Asp-470 acts as the Proton acceptor in catalysis. Phosphoserine is present on residues Ser-474 and Ser-587. Positions 577 to 599 (RFEREAAEQESQGKGVRKKHRRA) are disordered. Positions 590–599 (KGVRKKHRRA) match the Host nuclear localization signal motif.

It in the N-terminal section; belongs to the Crinkler effector family. In the C-terminal section; belongs to the protein kinase superfamily. In terms of assembly, dimerizes in host plants. Autophosphorylated at Ser-249, Ser-281, Ser-385, Ser-474 and Ser-587. Additional serines or threonines are also targeted for phosphorylation.

Its subcellular location is the secreted. The protein resides in the host nucleus. It carries out the reaction L-seryl-[protein] + ATP = O-phospho-L-seryl-[protein] + ADP + H(+). The enzyme catalyses L-threonyl-[protein] + ATP = O-phospho-L-threonyl-[protein] + ADP + H(+). Its function is as follows. Secreted effector that induces cell death when expressed in host plants. Acts as a kinase and is able to autophosphorylate, however its cell death inducing ability is not a direct result of its kinase activity, but rather a consequence of the phosphorylated state of the five identified serine residues in the CRN8 protein. In Phytophthora infestans (Potato late blight agent), this protein is Crinkler effector protein 8.